Consider the following 409-residue polypeptide: ATPase ASNA1 homolog (409 aa).

21–28 (KGGVGKTT) contacts ATP. Residue D62 is part of the active site. ATP is bound by residues E303 and N330. Zn(2+)-binding residues include C342 and C345.

It belongs to the arsA ATPase family. As to quaternary structure, homodimer.

It localises to the cytoplasm. It is found in the endoplasmic reticulum. Functionally, ATPase required for the post-translational delivery of tail-anchored (TA) proteins to the endoplasmic reticulum. Recognizes and selectively binds the transmembrane domain of TA proteins in the cytosol. This complex then targets to the endoplasmic reticulum by membrane-bound receptors, where the tail-anchored protein is released for insertion. This process is regulated by ATP binding and hydrolysis. ATP binding drives the homodimer towards the closed dimer state, facilitating recognition of newly synthesized TA membrane proteins. ATP hydrolysis is required for insertion. Subsequently, the homodimer reverts towards the open dimer state, lowering its affinity for the membrane-bound receptor, and returning it to the cytosol to initiate a new round of targeting. The polypeptide is ATPase ASNA1 homolog (Leishmania major).